We begin with the raw amino-acid sequence, 184 residues long: ATP synthase subunit b, chloroplastic (184 aa).

A helical membrane pass occupies residues 27–49; the sequence is LATNLINLSVVLGVLIFFGKGVL.

Belongs to the ATPase B chain family. F-type ATPases have 2 components, F(1) - the catalytic core - and F(0) - the membrane proton channel. F(1) has five subunits: alpha(3), beta(3), gamma(1), delta(1), epsilon(1). F(0) has four main subunits: a(1), b(1), b'(1) and c(10-14). The alpha and beta chains form an alternating ring which encloses part of the gamma chain. F(1) is attached to F(0) by a central stalk formed by the gamma and epsilon chains, while a peripheral stalk is formed by the delta, b and b' chains.

The protein localises to the plastid. The protein resides in the chloroplast thylakoid membrane. Its function is as follows. F(1)F(0) ATP synthase produces ATP from ADP in the presence of a proton or sodium gradient. F-type ATPases consist of two structural domains, F(1) containing the extramembraneous catalytic core and F(0) containing the membrane proton channel, linked together by a central stalk and a peripheral stalk. During catalysis, ATP synthesis in the catalytic domain of F(1) is coupled via a rotary mechanism of the central stalk subunits to proton translocation. Component of the F(0) channel, it forms part of the peripheral stalk, linking F(1) to F(0). The polypeptide is ATP synthase subunit b, chloroplastic (Liriodendron tulipifera (Tuliptree)).